The sequence spans 123 residues: Large ribosomal subunit protein uL14 (123 aa).

The protein belongs to the universal ribosomal protein uL14 family. As to quaternary structure, part of the 50S ribosomal subunit. Forms a cluster with proteins L3 and L19. In the 70S ribosome, L14 and L19 interact and together make contacts with the 16S rRNA in bridges B5 and B8.

Binds to 23S rRNA. Forms part of two intersubunit bridges in the 70S ribosome. The sequence is that of Large ribosomal subunit protein uL14 from Hamiltonella defensa subsp. Acyrthosiphon pisum (strain 5AT).